The sequence spans 421 residues: CinA-like protein (421 aa).

The protein belongs to the CinA family.

This is CinA-like protein from Synechococcus elongatus (strain ATCC 33912 / PCC 7942 / FACHB-805) (Anacystis nidulans R2).